Here is a 383-residue protein sequence, read N- to C-terminus: Lipoyl synthase, mitochondrial (383 aa).

The span at 25-34 (STPSLLQTLD) shows a compositional bias: polar residues. The disordered stretch occupies residues 25–44 (STPSLLQTLDPSVPSPPAAG). Residues C110, C115, C121, C141, C145, C148, and S357 each coordinate [4Fe-4S] cluster. In terms of domain architecture, Radical SAM core spans 126–346 (ETGTATATIM…RALGVEMGFR (221 aa)).

Belongs to the radical SAM superfamily. Lipoyl synthase family. The cofactor is [4Fe-4S] cluster.

The protein localises to the mitochondrion. The enzyme catalyses [[Fe-S] cluster scaffold protein carrying a second [4Fe-4S](2+) cluster] + N(6)-octanoyl-L-lysyl-[protein] + 2 oxidized [2Fe-2S]-[ferredoxin] + 2 S-adenosyl-L-methionine + 4 H(+) = [[Fe-S] cluster scaffold protein] + N(6)-[(R)-dihydrolipoyl]-L-lysyl-[protein] + 4 Fe(3+) + 2 hydrogen sulfide + 2 5'-deoxyadenosine + 2 L-methionine + 2 reduced [2Fe-2S]-[ferredoxin]. It participates in protein modification; protein lipoylation via endogenous pathway; protein N(6)-(lipoyl)lysine from octanoyl-[acyl-carrier-protein]: step 2/2. Catalyzes the radical-mediated insertion of two sulfur atoms into the C-6 and C-8 positions of the octanoyl moiety bound to the lipoyl domains of lipoate-dependent enzymes, thereby converting the octanoylated domains into lipoylated derivatives. The sequence is that of Lipoyl synthase, mitochondrial from Zea mays (Maize).